The following is a 181-amino-acid chain: CASP-like protein 5A1 (181 aa).

At 1–38 (MFASRPVVHPLEVAAPAHPVQQPAPGVLMKDLPGMPGT) the chain is on the cytoplasmic side. Residues 39–59 (PGGLGLRVLQLLFAAISLAVM) traverse the membrane as a helical segment. Over 60-77 (SSTADFASVSAFCYLITT) the chain is Extracellular. Residues 78-98 (TVLQCVWSLTVAIVDIYALLV) traverse the membrane as a helical segment. Topologically, residues 99-115 (KRCLQNRRAVTLFSIGD) are cytoplasmic. The chain crosses the membrane as a helical span at residues 116-136 (GITWLVSFSGACAAAGIPVLI). The Extracellular segment spans residues 137-153 (DADLIMCSENPCASFQT). Residues 154 to 174 (AVAMGFMCCFSLLPSFLLNFY) form a helical membrane-spanning segment. Residues 175 to 181 (SIASSHG) are Cytoplasmic-facing.

Belongs to the Casparian strip membrane proteins (CASP) family. In terms of assembly, homodimer and heterodimers.

Its subcellular location is the cell membrane. The sequence is that of CASP-like protein 5A1 from Zea mays (Maize).